Here is a 249-residue protein sequence, read N- to C-terminus: Type III pantothenate kinase (249 aa).

6–13 (DCGNSFIK) contacts ATP. Substrate is bound by residues Y93 and 100 to 103 (GMDR). The active-site Proton acceptor is the D102. A K(+)-binding site is contributed by D122. ATP is bound at residue T125. T181 serves as a coordination point for substrate.

It belongs to the type III pantothenate kinase family. In terms of assembly, homodimer. It depends on NH4(+) as a cofactor. K(+) is required as a cofactor.

It localises to the cytoplasm. It carries out the reaction (R)-pantothenate + ATP = (R)-4'-phosphopantothenate + ADP + H(+). Its pathway is cofactor biosynthesis; coenzyme A biosynthesis; CoA from (R)-pantothenate: step 1/5. Functionally, catalyzes the phosphorylation of pantothenate (Pan), the first step in CoA biosynthesis. This chain is Type III pantothenate kinase, found in Pseudomonas putida (strain W619).